Here is a 388-residue protein sequence, read N- to C-terminus: tRNA(Ile)-lysidine synthase (388 aa).

ATP is bound at residue 51–56 (SGGRDS).

Belongs to the tRNA(Ile)-lysidine synthase family.

The protein resides in the cytoplasm. It catalyses the reaction cytidine(34) in tRNA(Ile2) + L-lysine + ATP = lysidine(34) in tRNA(Ile2) + AMP + diphosphate + H(+). In terms of biological role, ligates lysine onto the cytidine present at position 34 of the AUA codon-specific tRNA(Ile) that contains the anticodon CAU, in an ATP-dependent manner. Cytidine is converted to lysidine, thus changing the amino acid specificity of the tRNA from methionine to isoleucine. This Bifidobacterium longum (strain NCC 2705) protein is tRNA(Ile)-lysidine synthase.